A 429-amino-acid chain; its full sequence is Glucose-1-phosphate adenylyltransferase (429 aa).

Alpha-D-glucose 1-phosphate is bound by residues Gly162, 177–178 (EK), and Ser209.

This sequence belongs to the bacterial/plant glucose-1-phosphate adenylyltransferase family. Homotetramer.

It carries out the reaction alpha-D-glucose 1-phosphate + ATP + H(+) = ADP-alpha-D-glucose + diphosphate. It functions in the pathway glycan biosynthesis; glycogen biosynthesis. Functionally, involved in the biosynthesis of ADP-glucose, a building block required for the elongation reactions to produce glycogen. Catalyzes the reaction between ATP and alpha-D-glucose 1-phosphate (G1P) to produce pyrophosphate and ADP-Glc. The protein is Glucose-1-phosphate adenylyltransferase of Nostoc punctiforme (strain ATCC 29133 / PCC 73102).